The primary structure comprises 258 residues: Small ribosomal subunit protein uS2 (258 aa).

Residues 234-258 (ETANAEEAMQKAAAVEAAAEAAPAQ) are disordered. A compositionally biased stretch (low complexity) spans 236 to 258 (ANAEEAMQKAAAVEAAAEAAPAQ).

Belongs to the universal ribosomal protein uS2 family.

This is Small ribosomal subunit protein uS2 from Desulfovibrio desulfuricans (strain ATCC 27774 / DSM 6949 / MB).